The chain runs to 85 residues: MFSWLKGRRSKDTLKDRLELVLAYDRAQIPPGKVDALRNDLLEVVKRYFPAGSSNVEVEQRGDQVVLMASIALDEGIENPGRRER.

Belongs to the MinE family.

Functionally, prevents the cell division inhibition by proteins MinC and MinD at internal division sites while permitting inhibition at polar sites. This ensures cell division at the proper site by restricting the formation of a division septum at the midpoint of the long axis of the cell. This Deinococcus geothermalis (strain DSM 11300 / CIP 105573 / AG-3a) protein is Cell division topological specificity factor.